The sequence spans 342 residues: Ketol-acid reductoisomerase (NADP(+)) (342 aa).

In terms of domain architecture, KARI N-terminal Rossmann spans 2 to 181 (VKVYYNGDIK…GGARAGVLET (180 aa)). Residues 25 to 28 (YGSQ), Arg-48, Ser-52, and 82 to 85 (DEQQ) each bind NADP(+). His-107 is a catalytic residue. Gly-133 provides a ligand contact to NADP(+). One can recognise a KARI C-terminal knotted domain in the interval 182–327 (TFKEETETDL…RKLREMMPFV (146 aa)). Residues Asp-190, Glu-194, Glu-226, and Glu-230 each contribute to the Mg(2+) site. Position 251 (Ser-251) interacts with substrate.

Belongs to the ketol-acid reductoisomerase family. Mg(2+) is required as a cofactor.

The catalysed reaction is (2R)-2,3-dihydroxy-3-methylbutanoate + NADP(+) = (2S)-2-acetolactate + NADPH + H(+). It catalyses the reaction (2R,3R)-2,3-dihydroxy-3-methylpentanoate + NADP(+) = (S)-2-ethyl-2-hydroxy-3-oxobutanoate + NADPH + H(+). It participates in amino-acid biosynthesis; L-isoleucine biosynthesis; L-isoleucine from 2-oxobutanoate: step 2/4. Its pathway is amino-acid biosynthesis; L-valine biosynthesis; L-valine from pyruvate: step 2/4. Involved in the biosynthesis of branched-chain amino acids (BCAA). Catalyzes an alkyl-migration followed by a ketol-acid reduction of (S)-2-acetolactate (S2AL) to yield (R)-2,3-dihydroxy-isovalerate. In the isomerase reaction, S2AL is rearranged via a Mg-dependent methyl migration to produce 3-hydroxy-3-methyl-2-ketobutyrate (HMKB). In the reductase reaction, this 2-ketoacid undergoes a metal-dependent reduction by NADPH to yield (R)-2,3-dihydroxy-isovalerate. This Bacillus licheniformis (strain ATCC 14580 / DSM 13 / JCM 2505 / CCUG 7422 / NBRC 12200 / NCIMB 9375 / NCTC 10341 / NRRL NRS-1264 / Gibson 46) protein is Ketol-acid reductoisomerase (NADP(+)).